The following is a 963-amino-acid chain: MARNNLEKMASIDAQMRLLVPGKVSEDDKLIEYDALLLDRFLDILQDLHGEDIRAMVQECYERSGEYEGKNDPHKLEELGNVLTSLDPGDSIVVASSFSHMLNLANLAEEVQIAYRRRNKIKRGGFADESNATTESDIEETFKRLVNQLGKSPAEVFDALKNQTVDLVLTAHPTQSVRRSLLQKHARIRNCLSQLYGKDITPDEKQELDEALLREIQAAFRTDEIRRTPPTPQDEMRAGMSYFHETIWKGVPKFLRRIDTALKSIGINERVPYNAPLIQFSSWMGGDRDGNPRVTPEVTRDVCLLARMMAANLYYSQIEDLMFELSMWRCSDELRARALQLHSASKKDAKHYIEFWKQIPPNEPFRVILGDVRDKLYNTRERTRQLLSNGISDIPEEVTFTNIDEFLEPLELCYRSLCSTGDQPIADGSLLDFMRQVSTFGLSFVKLDIRQESDRHSDVADAITRHLGIGSYKEWSEEQRQAWLLSELQGKRPLFGPDLPKTDEVRDVLDTFHVISELPADNFGAYIISMATAASDVLVVELLQRECHVKKPLRVVPLFEKLADLEAAPAALARLFSINWYRNRIDGKQEVMIGYSDSGKDAGRLSAGWALYKAQEDLIKVAKEFGIKLTMFHGRGGTVGRGGGPTHLAILSQPPDTIHGSFRVTVQGEVIEQSFGEEHLCFRTLQRFTAATLEHGMRPPVAPKPEWRELMDEMAVVATKEYRSIVFQDPRFVEYFRSATPELEYGRMNIGSRPSKRKPSGGIESLRAIPWIFAWTQTRFHLPVWLGFGAAFKHVMEKDIRNLHMLQQMYNEWPFFRVTIDLIEMVFAKGDPGIAALYDKLLVSDDLWAIGEKLRANYGETKDLLLQVAGHKDLLEGDPYLKQRLRLRDSYITTLNVCQAYTLKRIRDPNYHVNLRPHLSKESSTKPAAELVKLNPTSEYAPGLEDTLILTMKGIAAGMQNTG.

S11 bears the Phosphoserine mark. Residues H172 and K600 contribute to the active site.

The protein belongs to the PEPCase type 1 family. In terms of assembly, homotetramer. Requires Mg(2+) as cofactor.

The protein localises to the cytoplasm. The enzyme catalyses oxaloacetate + phosphate = phosphoenolpyruvate + hydrogencarbonate. With respect to regulation, by light-reversible phosphorylation. Functionally, through the carboxylation of phosphoenolpyruvate (PEP) it forms oxaloacetate, a four-carbon dicarboxylic acid source for the tricarboxylic acid cycle. In Picea abies (Norway spruce), this protein is Phosphoenolpyruvate carboxylase (PPC).